The following is a 617-amino-acid chain: uncharacterized protein (617 aa).

The chain crosses the membrane as a helical span at residues 10-30; it reads AFFFFFVSLILLFLSPSYSDV. A disordered region spans residues 34-58; that stretch reads ESDPIPYENSDASPGVVTSSESDRQ. The segment covering 43–53 has biased composition (polar residues); the sequence is SDASPGVVTSS. The stretch at 60 to 86 forms a coiled coil; sequence VSLHRLEELVRNLTELVARLDAKLSET. Residues 473–493 form a helical membrane-spanning segment; sequence MLWSSPVFFFILFLFGAWHFF. Low complexity predominate over residues 511–529; it reads STTMSSSSTTTAQNSSAFS. The tract at residues 511–617 is disordered; that stretch reads STTMSSSSTT…GNNKALDDES (107 aa). The span at 531–543 shows a compositional bias: basic and acidic residues; sequence STRRNDDHMDLRR. A compositionally biased stretch (polar residues) spans 563–584; that stretch reads VGSNDPSSRAPVETTNYRTTAQ. Gly residues predominate over residues 590–599; sequence GGSGLDSGGF.

It is found in the membrane. This is an uncharacterized protein from Arabidopsis thaliana (Mouse-ear cress).